The sequence spans 179 residues: ATP synthase subunit delta (179 aa).

Belongs to the ATPase delta chain family. In terms of assembly, F-type ATPases have 2 components, F(1) - the catalytic core - and F(0) - the membrane proton channel. F(1) has five subunits: alpha(3), beta(3), gamma(1), delta(1), epsilon(1). F(0) has three main subunits: a(1), b(2) and c(10-14). The alpha and beta chains form an alternating ring which encloses part of the gamma chain. F(1) is attached to F(0) by a central stalk formed by the gamma and epsilon chains, while a peripheral stalk is formed by the delta and b chains.

Its subcellular location is the cell inner membrane. Its function is as follows. F(1)F(0) ATP synthase produces ATP from ADP in the presence of a proton or sodium gradient. F-type ATPases consist of two structural domains, F(1) containing the extramembraneous catalytic core and F(0) containing the membrane proton channel, linked together by a central stalk and a peripheral stalk. During catalysis, ATP synthesis in the catalytic domain of F(1) is coupled via a rotary mechanism of the central stalk subunits to proton translocation. Functionally, this protein is part of the stalk that links CF(0) to CF(1). It either transmits conformational changes from CF(0) to CF(1) or is implicated in proton conduction. The sequence is that of ATP synthase subunit delta from Anaeromyxobacter sp. (strain Fw109-5).